Reading from the N-terminus, the 358-residue chain is Feruloyl CoA ortho-hydroxylase F6H1-1 (358 aa).

One can recognise a Fe2OG dioxygenase domain in the interval 200–308 (TKESLLMGSK…RISVPIFVNP (109 aa)). Residue tyrosine 216 coordinates 2-oxoglutarate. Fe cation contacts are provided by histidine 231, aspartate 233, and histidine 289. 2-oxoglutarate contacts are provided by arginine 299 and serine 301.

It belongs to the iron/ascorbate-dependent oxidoreductase family. It depends on L-ascorbate as a cofactor. Requires Fe(2+) as cofactor.

The catalysed reaction is (E)-feruloyl-CoA + 2-oxoglutarate + O2 = (E)-6-hydroxyferuloyl-CoA + succinate + CO2. It participates in phenylpropanoid metabolism. Its function is as follows. 2-oxoglutarate (OG)- and Fe(II)-dependent dioxygenase (2OGD) involved in scopoletin biosynthesis. Converts feruloyl CoA into 6'-hydroxyferuloyl CoA. The protein is Feruloyl CoA ortho-hydroxylase F6H1-1 of Ipomoea batatas (Sweet potato).